Here is a 581-residue protein sequence, read N- to C-terminus: Arginine--tRNA ligase (581 aa).

Residues 126 to 136 carry the 'HIGH' region motif; sequence PNLAKEMHVGH.

The protein belongs to the class-I aminoacyl-tRNA synthetase family. In terms of assembly, monomer.

It localises to the cytoplasm. It catalyses the reaction tRNA(Arg) + L-arginine + ATP = L-arginyl-tRNA(Arg) + AMP + diphosphate. The protein is Arginine--tRNA ligase of Shewanella sp. (strain MR-4).